Here is a 209-residue protein sequence, read N- to C-terminus: Pyridoxal phosphate homeostasis protein (209 aa).

An N6-(pyridoxal phosphate)lysine modification is found at Lys-31.

It belongs to the pyridoxal phosphate-binding protein YggS/PROSC family.

Its function is as follows. Pyridoxal 5'-phosphate (PLP)-binding protein, which is involved in PLP homeostasis. This chain is Pyridoxal phosphate homeostasis protein, found in Deinococcus radiodurans (strain ATCC 13939 / DSM 20539 / JCM 16871 / CCUG 27074 / LMG 4051 / NBRC 15346 / NCIMB 9279 / VKM B-1422 / R1).